Reading from the N-terminus, the 296-residue chain is Lipoyl synthase (296 aa).

The [4Fe-4S] cluster site is built by cysteine 37, cysteine 42, cysteine 48, cysteine 63, cysteine 67, cysteine 70, and serine 276. Residues 49–265 enclose the Radical SAM core domain; it reads WSKKHTTVMI…ERVAKTKGFL (217 aa).

The protein belongs to the radical SAM superfamily. Lipoyl synthase family. The cofactor is [4Fe-4S] cluster.

The protein localises to the cytoplasm. It catalyses the reaction [[Fe-S] cluster scaffold protein carrying a second [4Fe-4S](2+) cluster] + N(6)-octanoyl-L-lysyl-[protein] + 2 oxidized [2Fe-2S]-[ferredoxin] + 2 S-adenosyl-L-methionine + 4 H(+) = [[Fe-S] cluster scaffold protein] + N(6)-[(R)-dihydrolipoyl]-L-lysyl-[protein] + 4 Fe(3+) + 2 hydrogen sulfide + 2 5'-deoxyadenosine + 2 L-methionine + 2 reduced [2Fe-2S]-[ferredoxin]. It functions in the pathway protein modification; protein lipoylation via endogenous pathway; protein N(6)-(lipoyl)lysine from octanoyl-[acyl-carrier-protein]: step 2/2. Catalyzes the radical-mediated insertion of two sulfur atoms into the C-6 and C-8 positions of the octanoyl moiety bound to the lipoyl domains of lipoate-dependent enzymes, thereby converting the octanoylated domains into lipoylated derivatives. This Rickettsia peacockii (strain Rustic) protein is Lipoyl synthase.